Reading from the N-terminus, the 515-residue chain is Bifunctional NAD(P)H-hydrate repair enzyme Nnr (515 aa).

The tract at residues 1–227 (MTDHTMKKNP…GLDSWLAGQE (227 aa)) is NAD(P)H-hydrate epimerase. Residues 23 to 225 (IRRGEREAAD…SLGLDSWLAG (203 aa)) enclose the YjeF N-terminal domain. Positions 71 to 75 (NNGGD) are NADPHX 1; for epimerase activity. Asn72 and Asp135 together coordinate K(+). The NADPHX 1; for epimerase activity stretch occupies residues 139–145 (GTGLRQA). Residue Asp168 participates in (6S)-NADPHX binding. A K(+)-binding site is contributed by Ser171. Residues 234–501 (SAEQLSHWLK…STLQRIVNPE (268 aa)) form the YjeF C-terminal domain. Positions 235-515 (AEQLSHWLKP…NHDESSNSAP (281 aa)) are ADP-dependent (S)-NAD(P)H-hydrate dehydratase. Gly329 is a binding site for (6S)-NADPHX. The NADPHX 2; for dehydratase activity stretch occupies residues 375–381 (HPGEAAR). ADP contacts are provided by residues 412–416 (KGAGT) and 432–441 (NAGMASGGMG). Asp442 is a (6S)-NADPHX binding site.

The protein in the N-terminal section; belongs to the NnrE/AIBP family. It in the C-terminal section; belongs to the NnrD/CARKD family. K(+) serves as cofactor.

The enzyme catalyses (6S)-NADHX + ADP = AMP + phosphate + NADH + H(+). The catalysed reaction is (6S)-NADPHX + ADP = AMP + phosphate + NADPH + H(+). It catalyses the reaction (6R)-NADHX = (6S)-NADHX. It carries out the reaction (6R)-NADPHX = (6S)-NADPHX. Functionally, bifunctional enzyme that catalyzes the epimerization of the S- and R-forms of NAD(P)HX and the dehydration of the S-form of NAD(P)HX at the expense of ADP, which is converted to AMP. This allows the repair of both epimers of NAD(P)HX, a damaged form of NAD(P)H that is a result of enzymatic or heat-dependent hydration. The sequence is that of Bifunctional NAD(P)H-hydrate repair enzyme Nnr (nnr) from Escherichia coli (strain K12).